Here is a 192-residue protein sequence, read N- to C-terminus: 4'-phosphopantetheinyl transferase AcpT (192 aa).

This sequence belongs to the P-Pant transferase superfamily. Gsp/Sfp/HetI/AcpT family.

It carries out the reaction apo-[ACP] + CoA = holo-[ACP] + adenosine 3',5'-bisphosphate + H(+). May be involved in an alternative pathway for phosphopantetheinyl transfer and holo-ACP synthesis. The native apo-protein substrate is unknown. This chain is 4'-phosphopantetheinyl transferase AcpT (acpT), found in Salmonella typhi.